The primary structure comprises 518 residues: Protein nucleotidyltransferase YdiU (518 aa).

Residues M1–L10 are compositionally biased toward basic and acidic residues. Residues M1–R23 form a disordered region. Residues G100, G102, R103, K123, D135, G136, R193, and R200 each coordinate ATP. The Proton acceptor role is filled by D270. N271 and D280 together coordinate Mg(2+). D280 contributes to the ATP binding site.

The protein belongs to the SELO family. Mg(2+) is required as a cofactor. Requires Mn(2+) as cofactor.

The enzyme catalyses L-seryl-[protein] + ATP = 3-O-(5'-adenylyl)-L-seryl-[protein] + diphosphate. It carries out the reaction L-threonyl-[protein] + ATP = 3-O-(5'-adenylyl)-L-threonyl-[protein] + diphosphate. The catalysed reaction is L-tyrosyl-[protein] + ATP = O-(5'-adenylyl)-L-tyrosyl-[protein] + diphosphate. It catalyses the reaction L-histidyl-[protein] + UTP = N(tele)-(5'-uridylyl)-L-histidyl-[protein] + diphosphate. The enzyme catalyses L-seryl-[protein] + UTP = O-(5'-uridylyl)-L-seryl-[protein] + diphosphate. It carries out the reaction L-tyrosyl-[protein] + UTP = O-(5'-uridylyl)-L-tyrosyl-[protein] + diphosphate. Nucleotidyltransferase involved in the post-translational modification of proteins. It can catalyze the addition of adenosine monophosphate (AMP) or uridine monophosphate (UMP) to a protein, resulting in modifications known as AMPylation and UMPylation. The protein is Protein nucleotidyltransferase YdiU of Xanthomonas campestris pv. campestris (strain B100).